The following is an 88-amino-acid chain: Putative defensin-like protein 228 (88 aa).

The signal sequence occupies residues 1–27; it reads MMKSAILLMVSCVFMFLVVSYIQDVEG. 4 cysteine pairs are disulfide-bonded: cysteine 32–cysteine 88, cysteine 42–cysteine 66, cysteine 50–cysteine 82, and cysteine 64–cysteine 84.

The protein belongs to the DEFL family.

The protein resides in the secreted. In Arabidopsis thaliana (Mouse-ear cress), this protein is Putative defensin-like protein 228 (SCRL3).